A 283-amino-acid chain; its full sequence is Thymidylate synthase (283 aa).

A dUMP-binding site is contributed by R22. C160 functions as the Nucleophile in the catalytic mechanism. DUMP contacts are provided by residues 180–183, N191, and 221–223; these read RSCD and HIY. D183 contributes to the (6R)-5,10-methylene-5,6,7,8-tetrahydrofolate binding site. S282 lines the (6R)-5,10-methylene-5,6,7,8-tetrahydrofolate pocket.

It belongs to the thymidylate synthase family. Bacterial-type ThyA subfamily. Homodimer.

The protein localises to the cytoplasm. It catalyses the reaction dUMP + (6R)-5,10-methylene-5,6,7,8-tetrahydrofolate = 7,8-dihydrofolate + dTMP. It functions in the pathway pyrimidine metabolism; dTTP biosynthesis. In terms of biological role, catalyzes the reductive methylation of 2'-deoxyuridine-5'-monophosphate (dUMP) to 2'-deoxythymidine-5'-monophosphate (dTMP) while utilizing 5,10-methylenetetrahydrofolate (mTHF) as the methyl donor and reductant in the reaction, yielding dihydrofolate (DHF) as a by-product. This enzymatic reaction provides an intracellular de novo source of dTMP, an essential precursor for DNA biosynthesis. The polypeptide is Thymidylate synthase (Aliivibrio fischeri (strain ATCC 700601 / ES114) (Vibrio fischeri)).